Consider the following 295-residue polypeptide: SPX domain-containing protein 1 (295 aa).

One can recognise an SPX domain in the interval Met1 to Gln166. The segment at Leu199–Gly227 is disordered. Basic and acidic residues predominate over residues Glu204–Pro216.

Interacts (via SPX domain) with PHR2 (via C-terminus). Interacts with RLI1 in the nucleus to prevents its positive regulation of leaf inclination during phosphate (Pi) starvation. Predominantly expressed in roots and leaves. Localized in leaves lamina joints.

It is found in the nucleus. In terms of biological role, involved in plant adaptation to phosphate (Pi) starvation. Inhibits PHR2 DNA-binding activity via a Pi-dependent protein interaction. Suppresses the regulation on expression of PT2 by PHR2 and accumulation of shoot Pi. Optimizes growth under phosphate-limited conditions through a negative feedback loop of the PSI (phosphate starvation-induced) signaling pathway. Regulates the expression of SPX2, SPX3 and SPX5. May be an important link between signal transduction pathways related to phosphate starvation and cold stress. Together with SPX2, plays a negative role in the regulation of leaf inclination by preventing RLI1 transcription factor activity in Pi depleted conditions. The polypeptide is SPX domain-containing protein 1 (Oryza sativa subsp. japonica (Rice)).